Consider the following 205-residue polypeptide: Glycerol-3-phosphate acyltransferase (205 aa).

Helical transmembrane passes span 7 to 27, 54 to 74, 80 to 100, 116 to 136, 141 to 161, and 163 to 183; these read MTAL…VWVC, VVPA…VLWV, LPIW…SYPL, VLLM…ALLA, TAAV…YWLA, and EATL…AWNI.

It belongs to the PlsY family. As to quaternary structure, probably interacts with PlsX.

The protein localises to the cell inner membrane. It carries out the reaction an acyl phosphate + sn-glycerol 3-phosphate = a 1-acyl-sn-glycero-3-phosphate + phosphate. Its pathway is lipid metabolism; phospholipid metabolism. In terms of biological role, catalyzes the transfer of an acyl group from acyl-phosphate (acyl-PO(4)) to glycerol-3-phosphate (G3P) to form lysophosphatidic acid (LPA). This enzyme utilizes acyl-phosphate as fatty acyl donor, but not acyl-CoA or acyl-ACP. The chain is Glycerol-3-phosphate acyltransferase from Chromohalobacter salexigens (strain ATCC BAA-138 / DSM 3043 / CIP 106854 / NCIMB 13768 / 1H11).